The sequence spans 432 residues: Adenylosuccinate synthetase (432 aa).

GTP contacts are provided by residues 13–19 (GDEGKGK) and 41–43 (GHT). Catalysis depends on Asp14, which acts as the Proton acceptor. Mg(2+) is bound by residues Asp14 and Gly41. Residues 14–17 (DEGK), 39–42 (NAGH), Thr130, Arg144, Gln225, Thr240, and Arg304 contribute to the IMP site. Residue His42 is the Proton donor of the active site. A substrate-binding site is contributed by 300-306 (ATTGRRR). GTP-binding positions include Arg306, 332 to 334 (KLD), and 415 to 417 (STG).

The protein belongs to the adenylosuccinate synthetase family. Homodimer. Mg(2+) is required as a cofactor.

It is found in the cytoplasm. It catalyses the reaction IMP + L-aspartate + GTP = N(6)-(1,2-dicarboxyethyl)-AMP + GDP + phosphate + 2 H(+). Its pathway is purine metabolism; AMP biosynthesis via de novo pathway; AMP from IMP: step 1/2. Its function is as follows. Plays an important role in the de novo pathway of purine nucleotide biosynthesis. Catalyzes the first committed step in the biosynthesis of AMP from IMP. This Salmonella paratyphi C (strain RKS4594) protein is Adenylosuccinate synthetase.